Here is a 227-residue protein sequence, read N- to C-terminus: Cytochrome c oxidase subunit 2 (227 aa).

Over 1-14 (MAYPFQLGLQDATS) the chain is Mitochondrial intermembrane. A helical transmembrane segment spans residues 15 to 45 (PIMEELTNFHDHTLMIVFLISSLVLYIISLM). At 46-59 (LTTKLTHTSTMDAQ) the chain is on the mitochondrial matrix side. Residues 60–87 (EVETIWTILPAAILVLIALPSLRILYMM) traverse the membrane as a helical segment. Topologically, residues 88–227 (DEINNPVLTV…HFENWSASMV (140 aa)) are mitochondrial intermembrane. Positions 161, 196, 198, 200, 204, and 207 each coordinate Cu cation. E198 lines the Mg(2+) pocket.

Belongs to the cytochrome c oxidase subunit 2 family. As to quaternary structure, component of the cytochrome c oxidase (complex IV, CIV), a multisubunit enzyme composed of 14 subunits. The complex is composed of a catalytic core of 3 subunits MT-CO1, MT-CO2 and MT-CO3, encoded in the mitochondrial DNA, and 11 supernumerary subunits COX4I, COX5A, COX5B, COX6A, COX6B, COX6C, COX7A, COX7B, COX7C, COX8 and NDUFA4, which are encoded in the nuclear genome. The complex exists as a monomer or a dimer and forms supercomplexes (SCs) in the inner mitochondrial membrane with NADH-ubiquinone oxidoreductase (complex I, CI) and ubiquinol-cytochrome c oxidoreductase (cytochrome b-c1 complex, complex III, CIII), resulting in different assemblies (supercomplex SCI(1)III(2)IV(1) and megacomplex MCI(2)III(2)IV(2)). Found in a complex with TMEM177, COA6, COX18, COX20, SCO1 and SCO2. Interacts with TMEM177 in a COX20-dependent manner. Interacts with COX20. Interacts with COX16. It depends on Cu cation as a cofactor.

The protein resides in the mitochondrion inner membrane. It carries out the reaction 4 Fe(II)-[cytochrome c] + O2 + 8 H(+)(in) = 4 Fe(III)-[cytochrome c] + 2 H2O + 4 H(+)(out). In terms of biological role, component of the cytochrome c oxidase, the last enzyme in the mitochondrial electron transport chain which drives oxidative phosphorylation. The respiratory chain contains 3 multisubunit complexes succinate dehydrogenase (complex II, CII), ubiquinol-cytochrome c oxidoreductase (cytochrome b-c1 complex, complex III, CIII) and cytochrome c oxidase (complex IV, CIV), that cooperate to transfer electrons derived from NADH and succinate to molecular oxygen, creating an electrochemical gradient over the inner membrane that drives transmembrane transport and the ATP synthase. Cytochrome c oxidase is the component of the respiratory chain that catalyzes the reduction of oxygen to water. Electrons originating from reduced cytochrome c in the intermembrane space (IMS) are transferred via the dinuclear copper A center (CU(A)) of subunit 2 and heme A of subunit 1 to the active site in subunit 1, a binuclear center (BNC) formed by heme A3 and copper B (CU(B)). The BNC reduces molecular oxygen to 2 water molecules using 4 electrons from cytochrome c in the IMS and 4 protons from the mitochondrial matrix. In Uromys caudimaculatus (Giant white-tailed rat), this protein is Cytochrome c oxidase subunit 2 (MT-CO2).